The sequence spans 81 residues: uncharacterized protein (81 aa).

This is an uncharacterized protein from Sulfolobus islandicus rod-shaped virus 1 (SIRV-1).